Reading from the N-terminus, the 892-residue chain is Transposase for transposon Tn4556 (892 aa).

Residues 1–12 (MGGRAGLDDGRG) show a composition bias toward basic and acidic residues. Positions 1–63 (MGGRAGLDDG…GQPARDAEHR (63 aa)) are disordered. The segment covering 23–34 (VAEGAAGAAAWG) has biased composition (low complexity).

Belongs to the transposase 7 family.

Required for transposition of transposon Tn4556. The sequence is that of Transposase for transposon Tn4556 (tnpA) from Streptomyces fradiae (Streptomyces roseoflavus).